The primary structure comprises 513 residues: Zinc finger CCCH-type with G patch domain-containing protein (513 aa).

Residues 155 to 178 (PCSYYLEGECRFDETKCRFSHGAL) form a C3H1-type zinc finger. Composition is skewed to acidic residues over residues 252–261 (DQDEDDELSS) and 271–283 (DSSD…MDDL). The segment at 252–283 (DQDEDDELSSEESNSSMNDDSSDEAESDMDDL) is disordered. In terms of domain architecture, G-patch spans 312–358 (TRGIGSKLMEKMGYIHGTGLGSDGRGIVTPVSAQILPQGRSLDACME). The segment covering 455 to 467 (DMAKVKQSLDRNS) has biased composition (basic and acidic residues). A disordered region spans residues 455 to 513 (DMAKVKQSLDRNSGDAQLQKRLQVQMESHKQELATLQAQERSLSKEQQTRKSKNKMFEF). Polar residues predominate over residues 468–480 (GDAQLQKRLQVQM). The segment covering 496-513 (SLSKEQQTRKSKNKMFEF) has biased composition (basic and acidic residues).

The protein localises to the nucleus. Its function is as follows. Transcription repressor. The chain is Zinc finger CCCH-type with G patch domain-containing protein from Drosophila yakuba (Fruit fly).